The sequence spans 1203 residues: DNA-directed RNA polymerase subunit beta' (1203 aa).

C60, C62, C75, and C78 together coordinate Zn(2+). Positions 449, 451, and 453 each coordinate Mg(2+). Residues C818, C892, C899, and C902 each coordinate Zn(2+).

This sequence belongs to the RNA polymerase beta' chain family. As to quaternary structure, the RNAP catalytic core consists of 2 alpha, 1 beta, 1 beta' and 1 omega subunit. When a sigma factor is associated with the core the holoenzyme is formed, which can initiate transcription. Mg(2+) is required as a cofactor. It depends on Zn(2+) as a cofactor.

The enzyme catalyses RNA(n) + a ribonucleoside 5'-triphosphate = RNA(n+1) + diphosphate. In terms of biological role, DNA-dependent RNA polymerase catalyzes the transcription of DNA into RNA using the four ribonucleoside triphosphates as substrates. The protein is DNA-directed RNA polymerase subunit beta' of Bacillus anthracis.